The chain runs to 262 residues: Flap endonuclease Xni (262 aa).

Asp-109 provides a ligand contact to Mg(2+). The 5'-3' exonuclease domain maps to 165 to 255; the sequence is LKPEQLADYW…FNLQDIRYEK (91 aa). K(+)-binding residues include Leu-176, Ala-177, Ile-187, and Val-190. The tract at residues 189–194 is interaction with DNA; sequence GVGPKA.

Belongs to the Xni family. Mg(2+) is required as a cofactor. K(+) serves as cofactor.

Its function is as follows. Has flap endonuclease activity. During DNA replication, flap endonucleases cleave the 5'-overhanging flap structure that is generated by displacement synthesis when DNA polymerase encounters the 5'-end of a downstream Okazaki fragment. The polypeptide is Flap endonuclease Xni (Aliivibrio fischeri (strain MJ11) (Vibrio fischeri)).